The following is a 259-amino-acid chain: Global transcriptional regulator CodY (259 aa).

A GAF domain region spans residues 1 to 155 (MNLLQKTRKI…GATVVGMEIL (155 aa)). A DNA-binding region (H-T-H motif) is located at residues 203 to 222 (ASKIADRVGITRSVIVNALR). At serine 215 the chain carries Phosphoserine.

Belongs to the CodY family.

Its subcellular location is the cytoplasm. DNA-binding global transcriptional regulator which is involved in the adaptive response to starvation and acts by directly or indirectly controlling the expression of numerous genes in response to nutrient availability. During rapid exponential growth, CodY is highly active and represses genes whose products allow adaptation to nutrient depletion. This is Global transcriptional regulator CodY from Geobacillus sp. (strain WCH70).